Consider the following 208-residue polypeptide: GTP-binding protein YPTM1 (208 aa).

Residues 15 to 23 (GDSSVGKSC), 33 to 40 (YVDSYIST), 63 to 67 (DTAGQ), 121 to 124 (NKCD), and 151 to 153 (SAK) contribute to the GTP site. An Effector region motif is present at residues 37–45 (YISTIGVDF). Positions 189–208 (QMKGRPIQQEQQKSSRCCST) are disordered. The segment covering 196–208 (QQEQQKSSRCCST) has biased composition (polar residues). Residues Cys-205 and Cys-206 are each lipidated (S-geranylgeranyl cysteine).

Belongs to the small GTPase superfamily. Rab family. As to expression, low levels in coleoptiles.

The protein resides in the cell membrane. Functionally, protein transport. Probably involved in vesicular traffic. The protein is GTP-binding protein YPTM1 (YPTM1) of Zea mays (Maize).